Consider the following 597-residue polypeptide: Protein disulfide isomerase-like 1-4 (597 aa).

An N-terminal signal peptide occupies residues 1-25; the sequence is MAFRVLLLFSLTALLIFSAVSPSFA. Composition is skewed to acidic residues over residues 37 to 49 and 61 to 84; these read LSFLEDLKEDDVP and DEFEGGEEEDPDMYNDDDDEEGDF. The segment at 37–101 is disordered; it reads LSFLEDLKED…SDPLPTPEID (65 aa). The Thioredoxin 1 domain occupies 85-208; sequence SDLGNPDSDP…IVTWVKKKIG (124 aa). A glycan (N-linked (GlcNAc...) asparagine) is linked at Asn112. Active-site nucleophile residues include Cys132 and Cys135. A disulfide bridge connects residues Cys132 and Cys135. 2 N-linked (GlcNAc...) asparagine glycosylation sites follow: Asn213 and Asn342. The Thioredoxin 2 domain maps to 429–550; that stretch reads FYKSDPIPEK…FYKFLRKHAT (122 aa). Residues Cys471 and Cys474 each act as nucleophile in the active site. A disulfide bond links Cys471 and Cys474. Asn524 is a glycosylation site (N-linked (GlcNAc...) asparagine). Residues 555–597 are disordered; the sequence is LEKPASTESPKTAESTPKVETTETKESPDSTTKSSQSDSKDEL. A compositionally biased stretch (polar residues) spans 560–573; the sequence is STESPKTAESTPKV. Positions 594–597 match the Prevents secretion from ER motif; that stretch reads KDEL.

It belongs to the protein disulfide isomerase family. In terms of assembly, interacts with MEE8 and MED37A. Expressed in germinating seedling, including the cotyledons and hypocotyl, in vascular tissues, in pollen grains, root tips, leaf trichomes, developing seeds and siliques.

It is found in the endoplasmic reticulum lumen. Its subcellular location is the golgi apparatus. The protein localises to the vacuole. The protein resides in the nucleus. It localises to the secreted. It is found in the cell wall. The enzyme catalyses Catalyzes the rearrangement of -S-S- bonds in proteins.. In terms of biological role, acts as a protein-folding catalyst that interacts with nascent polypeptides to catalyze the formation, isomerization, and reduction or oxidation of disulfide bonds. In Arabidopsis thaliana (Mouse-ear cress), this protein is Protein disulfide isomerase-like 1-4 (PDIL1-4).